The primary structure comprises 349 residues: Cell adhesion molecule CEACAM8 (349 aa).

The first 34 residues, 1-34, serve as a signal peptide directing secretion; that stretch reads MGPISAPSCRWRIPWQGLLLTASLFTFWNPPTTA. Residues 35 to 142 enclose the Ig-like V-type domain; sequence QLTIEAVPSN…EVTGQFSVHP (108 aa). 11 N-linked (GlcNAc...) asparagine glycosylation sites follow: Asn-104, Asn-111, Asn-115, Asn-152, Asn-173, Asn-197, Asn-224, Asn-256, Asn-274, Asn-288, and Asn-309. 2 Ig-like C2-type domains span residues 145-232 and 237-319; these read PKPS…VTLN and PDAP…ITVS. Residues Cys-167 and Cys-215 are joined by a disulfide bond. Cys-259 and Cys-299 are disulfide-bonded. Asp-320 is lipidated: GPI-anchor amidated aspartate. Residues 321–349 constitute a propeptide, removed in mature form; that stretch reads ALVQGSSPGLSARATVSIMIGVLARVALI.

It belongs to the immunoglobulin superfamily. CEA family. As to quaternary structure, monomer. Heterodimer with CEACAM6; heterodimerizes via its Ig-like V-type domain. Post-translationally, glycosylated. In terms of tissue distribution, expressed in leukocytes of chronic myeloid Leukemia patients and bone marrow.

The protein localises to the cell membrane. The protein resides in the cell surface. Functionally, cell surface glycoprotein that plays a role in cell adhesion in a calcium-independent manner. Mediates heterophilic cell adhesion with other carcinoembryonic antigen-related cell adhesion molecules, such as CEACAM6. Heterophilic interaction with CEACAM8 occurs in activated neutrophils. In Homo sapiens (Human), this protein is Cell adhesion molecule CEACAM8.